The primary structure comprises 277 residues: Probable endonuclease 4 (277 aa).

Zn(2+) contacts are provided by His67, His107, Glu142, Asp176, His179, His211, Asp224, His226, and Glu256.

This sequence belongs to the AP endonuclease 2 family. It depends on Zn(2+) as a cofactor.

The enzyme catalyses Endonucleolytic cleavage to 5'-phosphooligonucleotide end-products.. Its function is as follows. Endonuclease IV plays a role in DNA repair. It cleaves phosphodiester bonds at apurinic or apyrimidinic (AP) sites, generating a 3'-hydroxyl group and a 5'-terminal sugar phosphate. This Clostridium botulinum (strain Alaska E43 / Type E3) protein is Probable endonuclease 4.